We begin with the raw amino-acid sequence, 51 residues long: Proteinase inhibitor PTI (51 aa).

4 disulfides stabilise this stretch: cysteine 3–cysteine 40, cysteine 6–cysteine 24, cysteine 7–cysteine 36, and cysteine 13–cysteine 49.

It belongs to the protease inhibitor I20 (potato type II proteinase inhibitor) family.

The protein localises to the secreted. The protein is Proteinase inhibitor PTI of Solanum tuberosum (Potato).